The chain runs to 253 residues: Ubiquinone/menaquinone biosynthesis C-methyltransferase UbiE (253 aa).

Residues Thr76, Asp97, 125–126 (NA), and Ser142 contribute to the S-adenosyl-L-methionine site.

It belongs to the class I-like SAM-binding methyltransferase superfamily. MenG/UbiE family.

The catalysed reaction is a 2-demethylmenaquinol + S-adenosyl-L-methionine = a menaquinol + S-adenosyl-L-homocysteine + H(+). It catalyses the reaction a 2-methoxy-6-(all-trans-polyprenyl)benzene-1,4-diol + S-adenosyl-L-methionine = a 5-methoxy-2-methyl-3-(all-trans-polyprenyl)benzene-1,4-diol + S-adenosyl-L-homocysteine + H(+). Its pathway is quinol/quinone metabolism; menaquinone biosynthesis; menaquinol from 1,4-dihydroxy-2-naphthoate: step 2/2. It participates in cofactor biosynthesis; ubiquinone biosynthesis. Methyltransferase required for the conversion of demethylmenaquinol (DMKH2) to menaquinol (MKH2) and the conversion of 2-polyprenyl-6-methoxy-1,4-benzoquinol (DDMQH2) to 2-polyprenyl-3-methyl-6-methoxy-1,4-benzoquinol (DMQH2). This is Ubiquinone/menaquinone biosynthesis C-methyltransferase UbiE from Xylella fastidiosa (strain M23).